The sequence spans 516 residues: HMG box-containing protein 1 (516 aa).

The segment at A150–N182 is disordered. Residues S156–F165 are compositionally biased toward low complexity. Positions P166–N182 are enriched in basic and acidic residues. The region spanning W203–F345 is the AXH domain. Positions C436–W504 form a DNA-binding region, HMG box.

Binds TCF4. Binds RB1. Binds the second PAH repeat of SIN3A. Ubiquitinated by the CTLH E3 ubiquitin-protein ligase complex, leading to subsequent proteasomal degradation.

The protein localises to the nucleus. Its function is as follows. Transcriptional repressor that binds to the promoter region of target genes. Plays a role in the regulation of the cell cycle and of the Wnt pathway. Binds preferentially to the sequence 5'-TTCATTCATTCA-3'. Binding to the histone H1.0 promoter is enhanced by interaction with RB1. Disrupts the interaction between DNA and TCF4. This Mus musculus (Mouse) protein is HMG box-containing protein 1 (Hbp1).